A 611-amino-acid chain; its full sequence is MQQDVIALKIDDKIIDLQTAEAQGIEGGEPVYFDNSPEALEVIRHSAAHLMAQAIKELYPEAKFYVGPTIENGFYYDLKTETPITDKDLKNIEKKMKALAKKKFDITRYEISMEEAREKFKNDELKQAVLDMIPGDTVSIYKQGDFEDLCRGPHVPNTKYLHNVKLQKVAGAYLGGDSKNEMLTRVYGTAFATKEALQEYLKMLEEAAKRDHRKLGTELELWMFDEEVGAGMPIWLPNGALLRGNLEKLLYSAHIRREYLPVRGPELLRSHMWKISGHYYNYKENMYFTEIENDDPEKPADEYGIKPMNCLAHVKIFGHKVRSYKELPLRLFEFGTVHRHEKSGVLHGLLRVREFTQDDAHIFCRPDQIEEEVIKVLEFVDSIMERFGFNYEMEISTRPEKSIGSDEIWEKATESLKKALNSLNREYGIDEGGGAFYGPKIDIKITDAIGRKWQCGTIQVDFNLPERFDITYVDENNERVRPVMIHRAIIGSFERFIAILTEHYAGEFPTFIAPIKAIFVPIAESHVEYAKKLQKELLEADINTEIFASNDSLNKRIRNAEKRRVGYVVIIGDEEVETGTVAIRDRKKREQYKMTKGEFVEMIKNLSEVKL.

The catalytic stretch occupies residues 211–509 (DHRKLGTELE…LTEHYAGEFP (299 aa)). Residues Cys-310, His-361, and His-486 each contribute to the Zn(2+) site.

Belongs to the class-II aminoacyl-tRNA synthetase family. As to quaternary structure, homodimer. It depends on Zn(2+) as a cofactor.

The protein localises to the cytoplasm. It carries out the reaction tRNA(Thr) + L-threonine + ATP = L-threonyl-tRNA(Thr) + AMP + diphosphate + H(+). Its function is as follows. Catalyzes the attachment of threonine to tRNA(Thr) in a two-step reaction: L-threonine is first activated by ATP to form Thr-AMP and then transferred to the acceptor end of tRNA(Thr). Also edits incorrectly charged L-seryl-tRNA(Thr). This is Threonine--tRNA ligase from Nautilia profundicola (strain ATCC BAA-1463 / DSM 18972 / AmH).